The following is a 49-amino-acid chain: Light-harvesting protein B-875 beta chain (49 aa).

The Cytoplasmic segment spans residues 2–27; that stretch reads ADKSDLGYTGLTDEQAQELHSVYMSG. A bacteriochlorophyll is bound by residues histidine 21 and histidine 39. Residues 28-45 traverse the membrane as a helical; Signal-anchor for type II membrane protein segment; that stretch reads LWLFSAVAIVAHLAVYIW. Over 46–49 the chain is Periplasmic; it reads RPWF.

This sequence belongs to the antenna complex beta subunit family. The core complex is formed by different alpha and beta chains, binding bacteriochlorophyll molecules, and arranged most probably in tetrameric structures disposed around the reaction center. The non-pigmented gamma chains may constitute additional components.

The protein localises to the cell inner membrane. Functionally, antenna complexes are light-harvesting systems, which transfer the excitation energy to the reaction centers. This is Light-harvesting protein B-875 beta chain (pufB) from Cereibacter sphaeroides (strain ATCC 17023 / DSM 158 / JCM 6121 / CCUG 31486 / LMG 2827 / NBRC 12203 / NCIMB 8253 / ATH 2.4.1.) (Rhodobacter sphaeroides).